The following is a 605-amino-acid chain: Elongation factor 4 (605 aa).

The region spanning 9-192 is the tr-type G domain; that stretch reads HHIRNFCIIA…AIVKRVPAPS (184 aa). Residues 21 to 26 and 139 to 142 contribute to the GTP site; these read DHGKST and NKID.

The protein belongs to the TRAFAC class translation factor GTPase superfamily. Classic translation factor GTPase family. LepA subfamily.

The protein resides in the cell inner membrane. It carries out the reaction GTP + H2O = GDP + phosphate + H(+). Functionally, required for accurate and efficient protein synthesis under certain stress conditions. May act as a fidelity factor of the translation reaction, by catalyzing a one-codon backward translocation of tRNAs on improperly translocated ribosomes. Back-translocation proceeds from a post-translocation (POST) complex to a pre-translocation (PRE) complex, thus giving elongation factor G a second chance to translocate the tRNAs correctly. Binds to ribosomes in a GTP-dependent manner. The polypeptide is Elongation factor 4 (Chlorobium phaeobacteroides (strain DSM 266 / SMG 266 / 2430)).